The sequence spans 233 residues: V-type proton ATPase subunit E (233 aa).

This sequence belongs to the V-ATPase E subunit family. In terms of assembly, V-ATPase is a heteromultimeric enzyme composed of a peripheral catalytic V1 complex (components A to H) attached to an integral membrane V0 proton pore complex (components: a, c, c', c'' and d).

Its function is as follows. Subunit of the peripheral V1 complex of vacuolar ATPase essential for assembly or catalytic function. V-ATPase is responsible for acidifying a variety of intracellular compartments in eukaryotic cells. This Dictyostelium discoideum (Social amoeba) protein is V-type proton ATPase subunit E (vatE).